Consider the following 243-residue polypeptide: NAD(P)H-quinone oxidoreductase subunit K (243 aa).

[4Fe-4S] cluster is bound by residues Cys-59, Cys-60, Cys-124, and Cys-155.

It belongs to the complex I 20 kDa subunit family. NDH-1 can be composed of about 15 different subunits; different subcomplexes with different compositions have been identified which probably have different functions. [4Fe-4S] cluster serves as cofactor.

It is found in the cellular thylakoid membrane. It catalyses the reaction a plastoquinone + NADH + (n+1) H(+)(in) = a plastoquinol + NAD(+) + n H(+)(out). The enzyme catalyses a plastoquinone + NADPH + (n+1) H(+)(in) = a plastoquinol + NADP(+) + n H(+)(out). Functionally, NDH-1 shuttles electrons from an unknown electron donor, via FMN and iron-sulfur (Fe-S) centers, to quinones in the respiratory and/or the photosynthetic chain. The immediate electron acceptor for the enzyme in this species is believed to be plastoquinone. Couples the redox reaction to proton translocation, and thus conserves the redox energy in a proton gradient. Cyanobacterial NDH-1 also plays a role in inorganic carbon-concentration. The polypeptide is NAD(P)H-quinone oxidoreductase subunit K (Picosynechococcus sp. (strain ATCC 27264 / PCC 7002 / PR-6) (Agmenellum quadruplicatum)).